The chain runs to 914 residues: Golgin candidate 6 (914 aa).

2 coiled-coil regions span residues 723-837 (IEKQ…SLKG) and 863-901 (EDEL…LEDI). Residue S911 is modified to Phosphoserine.

It localises to the golgi apparatus. The protein resides in the golgi stack. In terms of biological role, golgi matrix protein playing a role in tethering of vesicles to Golgi membranes and in maintaining the overall structure of the Golgi apparatus. Functions in the anterograde transport of storage protein precursors from the endoplasmic reticulum (ER) to the Golgi complex. The sequence is that of Golgin candidate 6 (GC6) from Arabidopsis thaliana (Mouse-ear cress).